Reading from the N-terminus, the 338-residue chain is RNA 3'-terminal phosphate cyclase (338 aa).

ATP-binding positions include Gln-103 and 283–287 (YLADQ). His-308 functions as the Tele-AMP-histidine intermediate in the catalytic mechanism.

This sequence belongs to the RNA 3'-terminal cyclase family. Type 1 subfamily.

Its subcellular location is the cytoplasm. The enzyme catalyses a 3'-end 3'-phospho-ribonucleotide-RNA + ATP = a 3'-end 2',3'-cyclophospho-ribonucleotide-RNA + AMP + diphosphate. Its function is as follows. Catalyzes the conversion of 3'-phosphate to a 2',3'-cyclic phosphodiester at the end of RNA. The mechanism of action of the enzyme occurs in 3 steps: (A) adenylation of the enzyme by ATP; (B) transfer of adenylate to an RNA-N3'P to produce RNA-N3'PP5'A; (C) and attack of the adjacent 2'-hydroxyl on the 3'-phosphorus in the diester linkage to produce the cyclic end product. The biological role of this enzyme is unknown but it is likely to function in some aspects of cellular RNA processing. This is RNA 3'-terminal phosphate cyclase from Escherichia coli (strain K12 / MC4100 / BW2952).